The chain runs to 2752 residues: Piezo-type mechanosensitive ion channel component 2 (2752 aa).

Topologically, residues 1–12 (MASEVVCGLIFR) are cytoplasmic. The chain crosses the membrane as a helical span at residues 13–24 (LLLPICLAVACA). The Extracellular segment spans residues 25–30 (FRYNGL). The chain crosses the membrane as a helical span at residues 31 to 43 (SFVYLIYLLLIPL). The Cytoplasmic segment spans residues 44-50 (FSEPTKT). The chain crosses the membrane as a helical span at residues 51-76 (TMQGHTGRLLKSLCFISLSFLLLHII). The Extracellular segment spans residues 77 to 122 (FHITLVSLEAQHRIAPGYNCSTWEKTFRQIGFESLKGADAGNGIRV). The N-linked (GlcNAc...) asparagine glycan is linked to Asn95. The helical transmembrane segment at 123–141 (FVPDIGMFIASLTIWLLCR) threads the bilayer. The Cytoplasmic segment spans residues 142-221 (NIVQKPVTDE…KEFIGNMITT (80 aa)). Residues 222-237 (AGKVVVTILLGSSGMM) traverse the membrane as a helical segment. At 238-240 (LPS) the chain is on the extracellular side. A helical membrane pass occupies residues 241–258 (LTSSVYFFVFLGLCTWWS). Topologically, residues 259 to 264 (WCRTFD) are cytoplasmic. A helical transmembrane segment spans residues 265-287 (PLLFSCLCVLLAIFTAGHLIGLY). At 288 to 335 (LYQFQFFQEAVPPNDYYARLFGIKSVIQTDCSSTWKIIVNPDLSWYHH) the chain is on the extracellular side. A helical membrane pass occupies residues 336–355 (ANPILLLVMYYTLATLIRIW). At 356 to 492 (LQEPLVQDEG…SIKVHAMVSV (137 aa)) the chain is on the cytoplasmic side. Residues 446–478 (STPQYRWEPSDESSEKREEEEEEKEEFEEERSR) are disordered. Residues 463-474 (EEEEEEKEEFEE) are compositionally biased toward acidic residues. A helical transmembrane segment spans residues 493-514 (FQFIMKQSYICALIAMMAWSIT). Residues 515-519 (YHSWL) lie on the Extracellular side of the membrane. A helical membrane pass occupies residues 520–531 (TFVLLIWSCTLW). Over 532–535 (MIRN) the chain is Cytoplasmic. Residues 536–562 (RRKYAMISSPFMVVYGNLLLILQYIWS) traverse the membrane as a helical segment. Over 563–583 (FELPEIKKVPGFLEKKEPGEL) the chain is Extracellular. The chain crosses the membrane as a helical span at residues 584–614 (ASKILFTITFWLLLRQHLTEQKALQEKEALL). Over 615–685 (SEVKIGSQEN…GNLVVAMFIK (71 aa)) the chain is Cytoplasmic. Positions 623–632 (ENEEKDEELQ) are enriched in acidic residues. The segment at 623–664 (ENEEKDEELQDIQVEGEPKEEEEEEAKEEKQERKKVEQEEAE) is disordered. The span at 649 to 660 (KEEKQERKKVEQ) shows a compositional bias: basic and acidic residues. Residues 686–699 (YWIYVCGGMFFFVS) form a helical membrane-spanning segment. Residues 700–705 (FEGKIV) are Extracellular-facing. Residues 706-724 (MYKIIYMVLFLFCVALYQV) traverse the membrane as a helical segment. Over 725–733 (HYEWWRKIL) the chain is Cytoplasmic. Residues 734 to 753 (KYFWMSVVIYTMLVLIFIYT) form a helical membrane-spanning segment. Residues 754 to 785 (YQFENFPGLWQNMTGLKKEKLEDLGLKQFTVA) lie on the Extracellular side of the membrane. A helical membrane pass occupies residues 786–807 (ELFTRIFIPTSFLLVCILHLHY). At 808-940 (FHDRFLELTD…QVFMWWILEL (133 aa)) the chain is on the cytoplasmic side. Residue Ser838 is modified to Phosphoserine. A compositionally biased stretch (basic and acidic residues) spans 862–883 (PGEEKLEGYSEKAQKGDLGKDS). Residues 862 to 902 (PGEEKLEGYSEKAQKGDLGKDSEESEEDGEEEEESEEEEET) are disordered. The segment covering 884–902 (EESEEDGEEEEESEEEEET) has biased composition (acidic residues). A helical transmembrane segment spans residues 941-956 (HIIKIVSSYIIWVSVK). Residues 957–962 (EVSLFN) are Extracellular-facing. The helical transmembrane segment at 963–972 (YVFLISWAFA) threads the bilayer. The Cytoplasmic segment spans residues 973–980 (LPYAKLRR). A helical membrane pass occupies residues 981–1001 (LASSVCTVWTCVIIVCKMLYQ). Topologically, residues 1002 to 1057 (LQTIKPENFSVNCSLPNENQTNIPFNELNKSLLYSAPIDPTEWVGLRKSSPLLVYL) are extracellular. N-linked (GlcNAc...) asparagine glycosylation occurs at Asn1013. A disulfide bond links Cys1014 and Cys1192. Residues 1058-1082 (RNNLLMLAILAFEVTIYRHQEYYRG) form a helical membrane-spanning segment. The Cytoplasmic segment spans residues 1083–1123 (RNNLTAPVSRTIFHDITRLHLDDGLINCAKYFINYFFYKFG). Residues 1124-1138 (LETCFLMSVNVIGQR) form a helical membrane-spanning segment. The Extracellular portion of the chain corresponds to 1139 to 1140 (MD). A helical membrane pass occupies residues 1141-1154 (FYAMIHACWLIAVL). The Cytoplasmic portion of the chain corresponds to 1155-1165 (YRRRRKAIAEI). The chain crosses the membrane as a helical span at residues 1166 to 1185 (WPKYCCFLACIITFQYFICI). At 1186 to 1222 (GIPPAPCRDYPWRFKGASFNDNIIKWLYFPDFIVRPN) the chain is on the extracellular side. Residues 1223–1243 (PVFLVYDFMLLLCASLQRQIF) form a helical membrane-spanning segment. Over 1244–1297 (EDENKAAVRIMAGDNVEICMNLDAASFSQHNPVPDFIHCRSYLDMSKVIIFSYL) the chain is Cytoplasmic. Residues 1298-1310 (FWFVLTIIFITGT) traverse the membrane as a helical segment. At 1311–1316 (TRISIF) the chain is on the extracellular side. A helical transmembrane segment spans residues 1317–1329 (CMGYLVACFYFLL). The Cytoplasmic portion of the chain corresponds to 1330–1338 (FGGDLLLKP). A helical membrane pass occupies residues 1339 to 1364 (IKSILRYWDWLIAYNVFVITMKNILS). Over 1365 to 1413 (IGACGYIGTLVHNSCWLIQAFSLACTVKGYQMPAANSPCTLPSGEAGII) the chain is Extracellular. Residues 1414–1430 (WDSICFAFLLLQRRVFM) traverse the membrane as a helical segment. Residues 1431 to 1921 (SYYFLHVVAD…YAMYNTLVAR (491 aa)) lie on the Cytoplasmic side of the membrane. Residues 1458–1529 (TIVKAVKARI…EREADKQKAK (72 aa)) are a coiled coil. Disordered regions lie at residues 1488 to 1534 (QQKY…KKKQ), 1593 to 1636 (ALRQ…KKSD), and 1844 to 1868 (SQDD…KLGS). Positions 1594 to 1615 (LRQRHKEKKRSAREERKRRRKG) are enriched in basic residues. A helical membrane pass occupies residues 1922–1936 (SEMVCYFVIILNHMV). Topologically, residues 1937–1943 (SASMITL) are extracellular. A helical membrane pass occupies residues 1944-1955 (LLPILIFLWAML). Residues 1956-1961 (SVPRPS) lie on the Cytoplasmic side of the membrane. A helical transmembrane segment spans residues 1962 to 1983 (RRFWMMAIVYTEVAIVVKYFFQ). Residues 1984 to 2016 (FGFFPWNKNVEVNKDKPYHPPNIIGVEKKEGYV) are Extracellular-facing. The chain crosses the membrane as a helical span at residues 2017-2035 (LYDLIQLLALFFHRSILKC). Residues 2036–2189 (HGLWDEDDMT…HPEYSAVTDV (154 aa)) are Cytoplasmic-facing. 2 disordered regions span residues 2047 to 2069 (SGMA…DSSD) and 2090 to 2135 (QQTA…SVLS). Low complexity predominate over residues 2100-2127 (GSSSEPSQRSSFSSNRSQRGSTSTRNSS). The chain crosses the membrane as a helical span at residues 2190–2209 (YVLMFLADTVDFIIIVFGFW). At 2210 to 2231 (AFGKHSAAADITSSLSEDQVPG) the chain is on the extracellular side. Residues 2232-2252 (PFLVMVLIQFGTMVVDRALYL) traverse the membrane as a helical segment. Residues 2253–2256 (RKTV) are Cytoplasmic-facing. The helical transmembrane segment at 2257–2280 (LGKVIFQVILVFGIHFWMFFILPG) threads the bilayer. Over 2281-2289 (VTERKFSQN) the chain is Extracellular. Residues 2290–2312 (LVAQLWYFVKCVYFGLSAYQIRC) traverse the membrane as a helical segment. Topologically, residues 2313–2397 (GYPTRVLGNF…YPQPRGQKKK (85 aa)) are cytoplasmic. A helical transmembrane segment spans residues 2398–2421 (KVVKYGMGGMIIVLLICIVWFPLL). The Extracellular segment spans residues 2422-2669 (FMSLIKSVAG…PSLGFLAGYG (248 aa)). The helical transmembrane segment at 2670 to 2690 (IMGLYASVVLVIGKFVREFFS) threads the bilayer. Residues 2691-2752 (GISHSIMFEE…MIKWTREKTN (62 aa)) are Cytoplasmic-facing.

It belongs to the PIEZO (TC 1.A.75) family. In terms of assembly, homotrimer; the homotrimer forms a propeller-shaped Piezo channel with a cation-ion conducting pore. Heterotrimeric interaction may occur between PIEZO1 and PIEZO2. Interacts with STOML3. Interacts with TMC7; the interaction inhibits PIEZO2-conducted mechanically activated currents. Interacts with TMC1; the interaction may be part of the MET complex. Interacts with MDFIC (via C-terminus); the interaction prolongs Piezo channel inactivation. Interacts with MDFI (via C-terminus); the interaction prolongs Piezo channel inactivation.

The protein resides in the cell membrane. It catalyses the reaction Ca(2+)(in) = Ca(2+)(out). Its activity is regulated as follows. Regulated by auxillary subunits MDFIC and MDFI. Channel activity is inhibited by TMEM120A. Phosphatidic acid and lysophosphatidic acid inhibit PIEZO2 channel activity. Functionally, pore-forming subunit of the mechanosensitive non-specific cation Piezo channel required for rapidly adapting mechanically activated (MA) currents and has a key role in sensing touch and tactile pain. Piezo channels are homotrimeric three-blade propeller-shaped structures that utilize a cap-motion and plug-and-latch mechanism to gate their ion-conducting pathways. Expressed in sensory neurons, is essential for diverse physiological processes, including respiratory control, systemic metabolism, urinary function, and proprioception. Mediates airway stretch sensing, enabling efficient respiration at birth and maintaining normal breathing in adults. It regulates brown and beige adipose tissue morphology and function, preventing systemic hypermetabolism. In the lower urinary tract, acts as a sensor in both the bladder urothelium and innervating sensory neurons being required for bladder-stretch sensing and urethral micturition reflexes, ensuring proper urinary function. Additionally, PIEZO2 serves as the principal mechanotransducer in proprioceptors, facilitating proprioception and coordinated body movements. In inner ear hair cells, PIEZO1/2 subunits may constitute part of the mechanotransducer (MET) non-selective cation channel complex where they may act as pore-forming ion-conducting component in the complex. Required for Merkel-cell mechanotransduction. Plays a major role in light-touch mechanosensation. The polypeptide is Piezo-type mechanosensitive ion channel component 2 (Homo sapiens (Human)).